An 89-amino-acid chain; its full sequence is Small ribosomal subunit protein uS14A (89 aa).

It belongs to the universal ribosomal protein uS14 family. In terms of assembly, part of the 30S ribosomal subunit. Contacts proteins S3 and S10.

Functionally, binds 16S rRNA, required for the assembly of 30S particles and may also be responsible for determining the conformation of the 16S rRNA at the A site. This Limosilactobacillus reuteri (strain DSM 20016) (Lactobacillus reuteri) protein is Small ribosomal subunit protein uS14A.